A 186-amino-acid polypeptide reads, in one-letter code: Casparian strip membrane protein 1 (186 aa).

The Cytoplasmic segment spans residues 1 to 26 (MKGGSIELGEVSKNASTNKGVKRGLS). Residues 27 to 47 (IMDFILRIIAGVATLASAVAM) traverse the membrane as a helical segment. At 48–72 (GTTDERLPFATSFVQFRAEYDDLPS) the chain is on the extracellular side. The chain crosses the membrane as a helical span at residues 73 to 93 (FVFFVLANSIVCGYLALSLIL). Residues 94–107 (SILHIVRSTAVKSR) lie on the Cytoplasmic side of the membrane. The helical transmembrane segment at 108 to 128 (ILLIVLDMVMMGLLAAAASAA) threads the bilayer. Topologically, residues 129–157 (ASIVYIAHYGNTQANWFPICQQYNSFCER) are extracellular. Residues 158–178 (ISGSLIGSYIAVALFIIIILL) traverse the membrane as a helical segment. Residues 179–186 (SQSAISRN) lie on the Cytoplasmic side of the membrane.

The protein belongs to the Casparian strip membrane proteins (CASP) family. In terms of assembly, homodimer and heterodimers.

The protein resides in the cell membrane. Functionally, regulates membrane-cell wall junctions and localized cell wall deposition. Required for establishment of the Casparian strip membrane domain (CSD) and the subsequent formation of Casparian strips, a cell wall modification of the root endodermis that determines an apoplastic barrier between the intraorganismal apoplasm and the extraorganismal apoplasm and prevents lateral diffusion. This Medicago truncatula (Barrel medic) protein is Casparian strip membrane protein 1.